Consider the following 440-residue polypeptide: Diaminopimelate decarboxylase (440 aa).

Lysine 61 is subject to N6-(pyridoxal phosphate)lysine. Residues glycine 234 and 275–278 (EPGR) each bind pyridoxal 5'-phosphate. Substrate contacts are provided by arginine 278, arginine 314, and tyrosine 318. Cysteine 348 (proton donor) is an active-site residue. Substrate is bound by residues glutamate 349 and tyrosine 384. A pyridoxal 5'-phosphate-binding site is contributed by tyrosine 384. The span at 421–431 (LAPELEPGPAL) shows a compositional bias: low complexity. Residues 421–440 (LAPELEPGPALSPRPSRDPR) are disordered.

The protein belongs to the Orn/Lys/Arg decarboxylase class-II family. LysA subfamily. Homodimer. The cofactor is pyridoxal 5'-phosphate.

The catalysed reaction is meso-2,6-diaminopimelate + H(+) = L-lysine + CO2. Its pathway is amino-acid biosynthesis; L-lysine biosynthesis via DAP pathway; L-lysine from DL-2,6-diaminopimelate: step 1/1. Specifically catalyzes the decarboxylation of meso-diaminopimelate (meso-DAP) to L-lysine. This is Diaminopimelate decarboxylase from Streptomyces coelicolor (strain ATCC BAA-471 / A3(2) / M145).